Consider the following 617-residue polypeptide: Leucine aminopeptidase 2 (617 aa).

A peptide is bound by residues 139 to 141 (QCQ) and 271 to 276 (PYGGME). Residue H300 participates in Zn(2+) binding. E301 serves as the catalytic Proton acceptor. H304 and E323 together coordinate Zn(2+). Catalysis depends on Y388, which acts as the Proton donor.

It belongs to the peptidase M1 family. Zn(2+) is required as a cofactor.

Its subcellular location is the cytoplasm. It localises to the nucleus. The enzyme catalyses an epoxide + H2O = an ethanediol. In terms of biological role, aminopeptidase that preferentially cleaves di- and tripeptides. Also has low epoxide hydrolase activity (in vitro). Can hydrolyze the epoxide leukotriene LTA(4) but it forms preferentially 5,6-dihydroxy-7,9,11,14-eicosatetraenoic acid rather than the cytokine leukotriene B(4) as the product compared to the homologous mammalian enzyme (in vitro). This chain is Leucine aminopeptidase 2, found in Neosartorya fischeri (strain ATCC 1020 / DSM 3700 / CBS 544.65 / FGSC A1164 / JCM 1740 / NRRL 181 / WB 181) (Aspergillus fischerianus).